Here is a 287-residue protein sequence, read N- to C-terminus: NAD-dependent protein deacylase sir-2.3 (287 aa).

Residues T10–M287 enclose the Deacetylase sirtuin-type domain. Residues G35–Y55 and Q116–D119 contribute to the NAD(+) site. H134 functions as the Proton acceptor in the catalytic mechanism. The Zn(2+) site is built by C142, C145, C196, and C199. NAD(+) contacts are provided by residues G236–S238, N262–G264, and I280.

It belongs to the sirtuin family. Class II subfamily. As to quaternary structure, interacts with pyc-1, pcca-1 and mccc-1. The cofactor is Zn(2+). Ubiquitously expressed with high expression in the pharynx, body wall muscles and gonad. Strong expression in a subset of non-neuronal cells in the head.

It localises to the mitochondrion matrix. It is found in the mitochondrion. It catalyses the reaction N(6)-acetyl-L-lysyl-[protein] + NAD(+) + H2O = 2''-O-acetyl-ADP-D-ribose + nicotinamide + L-lysyl-[protein]. Its function is as follows. NAD-dependent protein deacylase. Catalyzes the NAD-dependent hydrolysis of acyl groups from lysine residues. Plays a role in oxidative stress resistance. Might promote neuronal cell death under ischemic conditions and cell death in touch neurons induced by mec-4 channel hyperactivation, possibly downstream of the insulin-like receptor daf-2. Might attenuate the reactive oxygen species (ROS) scavenging system, that eliminates ROS in ischemic conditions, under dietary deprivation and when glycolysis is blocked. In Caenorhabditis elegans, this protein is NAD-dependent protein deacylase sir-2.3 (sir-2.3).